Reading from the N-terminus, the 255-residue chain is MLKIGDKQFESRLFTGTGKFANSRLMAEAIQVSGSQLATMALKRVDVNDQQDDILLPLVQAGVNLLPNTSGAKNAKDAVFAAQLAREALGTNWLKLEIHPDPKYLMPDPIETLSAAEQLVREGFIVLPYCHADPVLCKRLEEVGCAAVMPLGAPIGSNKGIVSHDFLEIIIDQANVPVVVDAGIGSPSHAARAMEMGADAVLVNTAIAASNDPVAMAKAFKLAVESGRMAYEAGLACKVSHAVASSPLTSFLDEL.

The active-site Schiff-base intermediate with DXP is the Lys-95. 1-deoxy-D-xylulose 5-phosphate contacts are provided by residues Gly-156, 182-183, and 204-205; these read AG and NT.

Belongs to the ThiG family. In terms of assembly, homotetramer. Forms heterodimers with either ThiH or ThiS.

It localises to the cytoplasm. It carries out the reaction [ThiS sulfur-carrier protein]-C-terminal-Gly-aminoethanethioate + 2-iminoacetate + 1-deoxy-D-xylulose 5-phosphate = [ThiS sulfur-carrier protein]-C-terminal Gly-Gly + 2-[(2R,5Z)-2-carboxy-4-methylthiazol-5(2H)-ylidene]ethyl phosphate + 2 H2O + H(+). It participates in cofactor biosynthesis; thiamine diphosphate biosynthesis. Functionally, catalyzes the rearrangement of 1-deoxy-D-xylulose 5-phosphate (DXP) to produce the thiazole phosphate moiety of thiamine. Sulfur is provided by the thiocarboxylate moiety of the carrier protein ThiS. In vitro, sulfur can be provided by H(2)S. The polypeptide is Thiazole synthase (Vibrio campbellii (strain ATCC BAA-1116)).